We begin with the raw amino-acid sequence, 466 residues long: MLPAGPAALSRRARQDKVCRRPSTGCSASLDSLPSEVLLKILSYLDAAALLCAGCVNRRFYHLANDNFIWIRIYSTAFSPRRSHWRVDPAEKTDLSVNLLSAGDKEAGYWKKEYLTKQIASVKAALARVLKPLHPHTGLPVKTKEALRVSGLGWVIILRAADGREYTMEHADLSVNDSSVTVVWYGKDWPPLATLSTLDLCGATPVFMGQSRTPSRIRPRWHSLITKYQLSQLTESSAVGGDRLMRVFCLPPGLVVGLWKREEELAFVMANLHLHCLVERSMLGSPAVPYELPPHTPVSDDSPERGLHGYRLHVDMHSGGASCLCGSFHNLSASKGYLENEYMKLTVISFKNNTEHLPLIGKVGLSWKTNSFDGCIKSCSIMDLTLLEEYGKPFWCFSSPVCVRCCPGPSDGPSFLGEAYCVDYSDSEGRLHMELVWVEETEEYFIVSLALYLRLAKVNQWFGTQY.

In terms of domain architecture, F-box spans 27–73; sequence SASLDSLPSEVLLKILSYLDAAALLCAGCVNRRFYHLANDNFIWIRI.

As to quaternary structure, directly interacts with SKP1 and CUL1.

Functionally, substrate-recognition component of the SCF (SKP1-CUL1-F-box protein)-type E3 ubiquitin ligase complex. This is F-box only protein 15 (FBXO15) from Bos taurus (Bovine).